Reading from the N-terminus, the 235-residue chain is Phosphoribosylaminoimidazole-succinocarboxamide synthase (235 aa).

The protein belongs to the SAICAR synthetase family.

It carries out the reaction 5-amino-1-(5-phospho-D-ribosyl)imidazole-4-carboxylate + L-aspartate + ATP = (2S)-2-[5-amino-1-(5-phospho-beta-D-ribosyl)imidazole-4-carboxamido]succinate + ADP + phosphate + 2 H(+). The protein operates within purine metabolism; IMP biosynthesis via de novo pathway; 5-amino-1-(5-phospho-D-ribosyl)imidazole-4-carboxamide from 5-amino-1-(5-phospho-D-ribosyl)imidazole-4-carboxylate: step 1/2. In Caldanaerobacter subterraneus subsp. tengcongensis (strain DSM 15242 / JCM 11007 / NBRC 100824 / MB4) (Thermoanaerobacter tengcongensis), this protein is Phosphoribosylaminoimidazole-succinocarboxamide synthase.